The primary structure comprises 390 residues: Alanine racemase (390 aa).

Lys46 (proton acceptor; specific for D-alanine) is an active-site residue. Lys46 is modified (N6-(pyridoxal phosphate)lysine). Arg144 serves as a coordination point for substrate. Residue Tyr275 is the Proton acceptor; specific for L-alanine of the active site. Residue Met323 participates in substrate binding.

This sequence belongs to the alanine racemase family. The cofactor is pyridoxal 5'-phosphate.

It catalyses the reaction L-alanine = D-alanine. Its pathway is amino-acid biosynthesis; D-alanine biosynthesis; D-alanine from L-alanine: step 1/1. Its function is as follows. Catalyzes the interconversion of L-alanine and D-alanine. May also act on other amino acids. The chain is Alanine racemase (alr) from Mycolicibacterium vanbaalenii (strain DSM 7251 / JCM 13017 / BCRC 16820 / KCTC 9966 / NRRL B-24157 / PYR-1) (Mycobacterium vanbaalenii).